Consider the following 443-residue polypeptide: Threonine/serine transporter TdcC (443 aa).

11 helical membrane-spanning segments follow: residues 22–42 (TTWT…FFPI), 44–64 (AGFG…PIAF), 97–117 (GVVI…IYGV), 135–155 (ALNR…IIWF), 163–183 (VMSF…LSLI), 207–227 (ILVT…FSPI), 259–279 (ASIL…FALS), 319–339 (ASII…LGTL), 366–386 (LSMV…PNIL), 389–409 (IEAM…MYAI), and 422–442 (IDNV…VYKV).

It belongs to the amino acid/polyamine transporter 2 family. SdaC/TdcC subfamily.

It localises to the cell inner membrane. The catalysed reaction is L-threonine(in) + H(+)(in) = L-threonine(out) + H(+)(out). The enzyme catalyses L-serine(in) + H(+)(in) = L-serine(out) + H(+)(out). Functionally, involved in the import of threonine and serine into the cell, with the concomitant import of a proton (symport system). The protein is Threonine/serine transporter TdcC of Escherichia fergusonii (strain ATCC 35469 / DSM 13698 / CCUG 18766 / IAM 14443 / JCM 21226 / LMG 7866 / NBRC 102419 / NCTC 12128 / CDC 0568-73).